Here is a 500-residue protein sequence, read N- to C-terminus: Protein nucleotidyltransferase YdiU (500 aa).

The ATP site is built by glycine 96, glycine 98, arginine 99, lysine 119, aspartate 131, glycine 132, arginine 182, and arginine 189. Aspartate 258 acts as the Proton acceptor in catalysis. Mg(2+) contacts are provided by asparagine 259 and aspartate 268. An ATP-binding site is contributed by aspartate 268.

It belongs to the SELO family. Mg(2+) serves as cofactor. It depends on Mn(2+) as a cofactor.

The enzyme catalyses L-seryl-[protein] + ATP = 3-O-(5'-adenylyl)-L-seryl-[protein] + diphosphate. It carries out the reaction L-threonyl-[protein] + ATP = 3-O-(5'-adenylyl)-L-threonyl-[protein] + diphosphate. It catalyses the reaction L-tyrosyl-[protein] + ATP = O-(5'-adenylyl)-L-tyrosyl-[protein] + diphosphate. The catalysed reaction is L-histidyl-[protein] + UTP = N(tele)-(5'-uridylyl)-L-histidyl-[protein] + diphosphate. The enzyme catalyses L-seryl-[protein] + UTP = O-(5'-uridylyl)-L-seryl-[protein] + diphosphate. It carries out the reaction L-tyrosyl-[protein] + UTP = O-(5'-uridylyl)-L-tyrosyl-[protein] + diphosphate. Its function is as follows. Nucleotidyltransferase involved in the post-translational modification of proteins. It can catalyze the addition of adenosine monophosphate (AMP) or uridine monophosphate (UMP) to a protein, resulting in modifications known as AMPylation and UMPylation. The sequence is that of Protein nucleotidyltransferase YdiU from Rhizobium etli (strain ATCC 51251 / DSM 11541 / JCM 21823 / NBRC 15573 / CFN 42).